A 376-amino-acid polypeptide reads, in one-letter code: Glutamate 5-kinase (376 aa).

Residue Lys-17 participates in ATP binding. Ser-57, Asp-144, and Asn-156 together coordinate substrate. 176 to 177 (TD) contacts ATP. Residues 283 to 361 (KGQLVLDEGA…SEINQLLGYS (79 aa)) form the PUA domain.

The protein belongs to the glutamate 5-kinase family.

Its subcellular location is the cytoplasm. The catalysed reaction is L-glutamate + ATP = L-glutamyl 5-phosphate + ADP. The protein operates within amino-acid biosynthesis; L-proline biosynthesis; L-glutamate 5-semialdehyde from L-glutamate: step 1/2. In terms of biological role, catalyzes the transfer of a phosphate group to glutamate to form L-glutamate 5-phosphate. In Hydrogenovibrio crunogenus (strain DSM 25203 / XCL-2) (Thiomicrospira crunogena), this protein is Glutamate 5-kinase.